The following is a 626-amino-acid chain: Mitogen-activated protein kinase kinase kinase 3 (626 aa).

Positions 44-123 constitute a PB1 domain; sequence DVRIKFEHNG…KSLRILLLSQ (80 aa). Disordered stretches follow at residues 125–184 and 218–273; these read RNHT…YVPE and SSAE…VKGG. 4 stretches are compositionally biased toward polar residues: residues 128–137, 144–155, 165–174, and 219–247; these read TSSSPHSGVS, PSQSAGDINTIY, LSVSSQNPGR, and SAEN…QMSR. Phosphoserine occurs at positions 147 and 166. Ser250 and Ser312 each carry phosphoserine. Residues 250-270 are compositionally biased toward basic and acidic residues; it reads SFPDNRKECSDRETQLYDKGV. Residue Ser337 is modified to Phosphoserine; by SGK1. A Phosphoserine modification is found at Ser340. The 261-residue stretch at 362 to 622 folds into the Protein kinase domain; that stretch reads WRRGKLLGQG…AEELLTHHFA (261 aa). ATP-binding positions include 368–376 and Lys391; that span reads LGQGAFGRV. The Proton acceptor role is filled by Asp489.

This sequence belongs to the protein kinase superfamily. STE Ser/Thr protein kinase family. MAP kinase kinase kinase subfamily. Binds both upstream activators and downstream substrates in multimolecular complexes. Part of a complex with MAP2K3, RAC1 and CCM2. Interacts with MAP2K5 and SPAG9. The cofactor is Mg(2+). In terms of processing, phosphorylation at Ser-166 and Ser-337 by SGK1 inhibits its activity.

It carries out the reaction L-seryl-[protein] + ATP = O-phospho-L-seryl-[protein] + ADP + H(+). It catalyses the reaction L-threonyl-[protein] + ATP = O-phospho-L-threonyl-[protein] + ADP + H(+). Activated by phosphorylation on Thr-530. Component of a protein kinase signal transduction cascade. Mediates activation of the NF-kappa-B, AP1 and DDIT3 transcriptional regulators. This chain is Mitogen-activated protein kinase kinase kinase 3 (Map3k3), found in Mus musculus (Mouse).